The chain runs to 581 residues: Proline--tRNA ligase (581 aa).

The protein belongs to the class-II aminoacyl-tRNA synthetase family. ProS type 1 subfamily. In terms of assembly, homodimer.

The protein resides in the cytoplasm. The catalysed reaction is tRNA(Pro) + L-proline + ATP = L-prolyl-tRNA(Pro) + AMP + diphosphate. In terms of biological role, catalyzes the attachment of proline to tRNA(Pro) in a two-step reaction: proline is first activated by ATP to form Pro-AMP and then transferred to the acceptor end of tRNA(Pro). As ProRS can inadvertently accommodate and process non-cognate amino acids such as alanine and cysteine, to avoid such errors it has two additional distinct editing activities against alanine. One activity is designated as 'pretransfer' editing and involves the tRNA(Pro)-independent hydrolysis of activated Ala-AMP. The other activity is designated 'posttransfer' editing and involves deacylation of mischarged Ala-tRNA(Pro). The misacylated Cys-tRNA(Pro) is not edited by ProRS. This chain is Proline--tRNA ligase, found in Paracidovorax citrulli (strain AAC00-1) (Acidovorax citrulli).